The chain runs to 555 residues: Myo-inositol transporter 2 (555 aa).

Residues 1-61 (MSSTLDTITP…NLVRAENEDK (61 aa)) lie on the Cytoplasmic side of the membrane. Residues 62 to 82 (VTPYFMFLISVAAIAGFLFGY) form a helical membrane-spanning segment. At 83–108 (DTGIVGAALPMVGTSLGHTLSATESE) the chain is on the extracellular side. The helical transmembrane segment at 109–129 (IITAGTTIGAIFGASILGTMA) threads the bilayer. At 130–142 (DKLGRKWAMIISD) the chain is on the cytoplasmic side. The helical transmembrane segment at 143 to 163 (FAFTAGAIIIAASYSVPQIIV) threads the bilayer. Over 164 to 165 (GR) the chain is Extracellular. Residues 166-186 (LVLGVGVGGAAVIAPLYIAEL) traverse the membrane as a helical segment. At 187-200 (APTAVRGRCVGANA) the chain is on the cytoplasmic side. The chain crosses the membrane as a helical span at residues 201 to 221 (FCIPFGQVVASAIGAGFQAGV). Over 222 to 228 (PYHIGWR) the chain is Extracellular. The helical transmembrane segment at 229-249 (VLFGLGVVPSVVQLCLMHFLP) threads the bilayer. At 250-328 (ESPRVLVLRG…AIISVSGVQA (79 aa)) the chain is on the cytoplasmic side. A helical transmembrane segment spans residues 329-349 (FGQLTGFNTLLYYSGTIFGLL). The Extracellular portion of the chain corresponds to 350-355 (GLKNGA). The helical transmembrane segment at 356–376 (AAGLIPSCLNALFVFIGMSIV) threads the bilayer. At 377 to 385 (DKVGRRKLM) the chain is on the cytoplasmic side. Residues 386–406 (ITFIPGMMIAFTWTIISFHFL) traverse the membrane as a helical segment. Over 407–427 (TKPTGGLLLKDYQYSTPLVGS) the chain is Extracellular. The chain crosses the membrane as a helical span at residues 428-448 (VLGSIVLFVIPFGLTYSHIIW). Residues 449–461 (YQSEFLPLEIRAA) lie on the Cytoplasmic side of the membrane. The chain crosses the membrane as a helical span at residues 462-482 (GSAISTTACWLANLVVSVAYL). The Extracellular portion of the chain corresponds to 483-487 (TQLEK). A helical membrane pass occupies residues 488–508 (LGATGTYGLYLGFITIGYIFV). Residues 509-555 (YFCYPETKGLSIDETAEIFIDGFGIEKAHQMLREKRAFAAELYAGRA) are Cytoplasmic-facing.

The protein belongs to the major facilitator superfamily. Sugar transporter (TC 2.A.1.1) family.

It is found in the cell membrane. The enzyme catalyses myo-inositol(out) + H(+)(out) = myo-inositol(in) + H(+)(in). Transporter for myo-inositol. This is Myo-inositol transporter 2 from Cryptococcus neoformans var. grubii serotype A (strain H99 / ATCC 208821 / CBS 10515 / FGSC 9487) (Filobasidiella neoformans var. grubii).